Consider the following 916-residue polypeptide: Nonsense-mediated mRNA decay factor SMG8 (916 aa).

The tract at residues leucine 566–aspartate 626 is disordered. Residues leucine 589–phenylalanine 604 are compositionally biased toward polar residues.

This sequence belongs to the SMG8 family.

Functionally, involved in nonsense-mediated decay (NMD) of mRNAs containing premature stop codons. Probable component of kinase complex containing SMG1 and recruited to stalled ribosomes. The sequence is that of Nonsense-mediated mRNA decay factor SMG8 from Aedes aegypti (Yellowfever mosquito).